The following is a 46-amino-acid chain: Defensin Tk-AMP-D5 (46 aa).

Cystine bridges form between Cys3-Cys46, Cys14-Cys34, Cys20-Cys40, and Cys24-Cys42.

Its function is as follows. Plant defense peptide. The sequence is that of Defensin Tk-AMP-D5 from Triticum kiharae (Wheat).